The sequence spans 87 residues: Down syndrome critical region protein 10 (87 aa).

Expressed in placenta and testis.

In Homo sapiens (Human), this protein is Down syndrome critical region protein 10 (DSCR10).